The chain runs to 314 residues: Hydroxyethylthiazole kinase (314 aa).

Met-70 is a substrate binding site. Residues Arg-145 and Ser-217 each coordinate ATP. Residue Gly-244 coordinates substrate.

Belongs to the Thz kinase family. Mg(2+) serves as cofactor.

The enzyme catalyses 5-(2-hydroxyethyl)-4-methylthiazole + ATP = 4-methyl-5-(2-phosphooxyethyl)-thiazole + ADP + H(+). It functions in the pathway cofactor biosynthesis; thiamine diphosphate biosynthesis; 4-methyl-5-(2-phosphoethyl)-thiazole from 5-(2-hydroxyethyl)-4-methylthiazole: step 1/1. In terms of biological role, catalyzes the phosphorylation of the hydroxyl group of 4-methyl-5-beta-hydroxyethylthiazole (THZ). The polypeptide is Hydroxyethylthiazole kinase (Bifidobacterium longum (strain DJO10A)).